We begin with the raw amino-acid sequence, 188 residues long: F-box only protein 36 (188 aa).

Residues 91-137 (FDYLERLSDRLLLKIICYLDLEDIASLSQTSSKFEKLCKSDLLWEQI) enclose the F-box domain.

Directly interacts with SKP1 and CUL1.

Functionally, substrate-recognition component of the SCF (SKP1-CUL1-F-box protein)-type E3 ubiquitin ligase complex. This is F-box only protein 36 (Fbxo36) from Mus musculus (Mouse).